A 176-amino-acid polypeptide reads, in one-letter code: Ribosome maturation factor RimM (176 aa).

Residues 101 to 173 (EGEYYHYRLI…RMVVDLPEGL (73 aa)) enclose the PRC barrel domain.

Belongs to the RimM family. Binds ribosomal protein uS19.

The protein localises to the cytoplasm. An accessory protein needed during the final step in the assembly of 30S ribosomal subunit, possibly for assembly of the head region. Essential for efficient processing of 16S rRNA. May be needed both before and after RbfA during the maturation of 16S rRNA. It has affinity for free ribosomal 30S subunits but not for 70S ribosomes. The chain is Ribosome maturation factor RimM from Syntrophobacter fumaroxidans (strain DSM 10017 / MPOB).